Reading from the N-terminus, the 67-residue chain is Large ribosomal subunit protein bL31 (67 aa).

4 residues coordinate Zn(2+): Cys16, Cys18, Cys36, and Cys39.

Belongs to the bacterial ribosomal protein bL31 family. Type A subfamily. In terms of assembly, part of the 50S ribosomal subunit. Requires Zn(2+) as cofactor.

Binds the 23S rRNA. The sequence is that of Large ribosomal subunit protein bL31 from Syntrophomonas wolfei subsp. wolfei (strain DSM 2245B / Goettingen).